Here is a 349-residue protein sequence, read N- to C-terminus: tRNA pseudouridine synthase D (349 aa).

Substrate is bound at residue F27. Catalysis depends on D80, which acts as the Nucleophile. N129 contacts substrate. The region spanning 155 to 303 (GVPNYFGAQR…VEAARRAMLL (149 aa)) is the TRUD domain. Position 329 (F329) interacts with substrate.

Belongs to the pseudouridine synthase TruD family.

It catalyses the reaction uridine(13) in tRNA = pseudouridine(13) in tRNA. Responsible for synthesis of pseudouridine from uracil-13 in transfer RNAs. The protein is tRNA pseudouridine synthase D of Shigella boydii serotype 18 (strain CDC 3083-94 / BS512).